Here is a 362-residue protein sequence, read N- to C-terminus: Protein RecA (362 aa).

67 to 74 (GPESSGKT) serves as a coordination point for ATP. A compositionally biased stretch (low complexity) spans 337–356 (VADAPADSAPAPVAAVAPKA). A disordered region spans residues 337–362 (VADAPADSAPAPVAAVAPKASARKSA).

The protein belongs to the RecA family.

It is found in the cytoplasm. Can catalyze the hydrolysis of ATP in the presence of single-stranded DNA, the ATP-dependent uptake of single-stranded DNA by duplex DNA, and the ATP-dependent hybridization of homologous single-stranded DNAs. It interacts with LexA causing its activation and leading to its autocatalytic cleavage. The protein is Protein RecA of Clavibacter michiganensis subsp. michiganensis (strain NCPPB 382).